The chain runs to 75 residues: UPF0346 protein LSL_0716 (75 aa).

The protein belongs to the UPF0346 family.

The protein is UPF0346 protein LSL_0716 of Ligilactobacillus salivarius (strain UCC118) (Lactobacillus salivarius).